Here is a 241-residue protein sequence, read N- to C-terminus: DNA repair protein RecO (241 aa).

The protein belongs to the RecO family.

Involved in DNA repair and RecF pathway recombination. The polypeptide is DNA repair protein RecO (Yersinia pseudotuberculosis serotype O:1b (strain IP 31758)).